We begin with the raw amino-acid sequence, 328 residues long: Cytochrome f (328 aa).

The N-terminal stretch at 1–44 (MRNPDTLGLWTKTMVALRRFTVLAIATVSVFLITDLGLPQAASA) is a signal peptide. Residues Tyr-45, Cys-66, Cys-69, and His-70 each coordinate heme. Residues 296 to 313 (FLVLFLAGIMLSQILLVL) traverse the membrane as a helical segment.

Belongs to the cytochrome f family. In terms of assembly, the 4 large subunits of the cytochrome b6-f complex are cytochrome b6, subunit IV (17 kDa polypeptide, PetD), cytochrome f and the Rieske protein, while the 4 small subunits are PetG, PetL, PetM and PetN. The complex functions as a dimer. Heme serves as cofactor.

Its subcellular location is the cellular thylakoid membrane. In terms of biological role, component of the cytochrome b6-f complex, which mediates electron transfer between photosystem II (PSII) and photosystem I (PSI), cyclic electron flow around PSI, and state transitions. The sequence is that of Cytochrome f (petA) from Synechocystis sp. (strain ATCC 27184 / PCC 6803 / Kazusa).